We begin with the raw amino-acid sequence, 191 residues long: Adenine phosphoribosyltransferase (191 aa).

Belongs to the purine/pyrimidine phosphoribosyltransferase family. As to quaternary structure, homodimer.

It localises to the cytoplasm. The catalysed reaction is AMP + diphosphate = 5-phospho-alpha-D-ribose 1-diphosphate + adenine. It participates in purine metabolism; AMP biosynthesis via salvage pathway; AMP from adenine: step 1/1. In terms of biological role, catalyzes a salvage reaction resulting in the formation of AMP, that is energically less costly than de novo synthesis. In Bordetella bronchiseptica (strain ATCC BAA-588 / NCTC 13252 / RB50) (Alcaligenes bronchisepticus), this protein is Adenine phosphoribosyltransferase.